The following is a 257-amino-acid chain: MIADLSLDADVAEQTQQTLGADSNFAQRHPLQIAVCLRQLVAGQDFVTVEFGGRQIVTQILDVDSRNARFVFDAGSVADDNDALPSARQLTFRSLPGGIRTEFTTFDATPTQFDGLPAFEAPLPTVLHYVQRREFFRVQTPVLDPYIASGRYADGGSFRLELLDLSLGGIALKTADERFGSLERGTVLRDVALQLGGFGMLRLDLEIVAPRQVSTAKGDRRFVIGCKFVATPGPAERTLQRVVTQLETRRQALTPRR.

Residues 131–244 form the PilZ domain; it reads QRREFFRVQT…AERTLQRVVT (114 aa).

The protein belongs to the YcgR family. Monomer. Interacts with the flagellar basal bodies.

It localises to the bacterial flagellum basal body. In terms of biological role, acts as a flagellar brake, regulating swimming and swarming in a bis-(3'-5') cyclic diguanylic acid (c-di-GMP)-dependent manner. Binds 1 c-di-GMP dimer per subunit. Increasing levels of c-di-GMP lead to decreased motility. The polypeptide is Flagellar brake protein YcgR 2 (Paraburkholderia phytofirmans (strain DSM 17436 / LMG 22146 / PsJN) (Burkholderia phytofirmans)).